A 56-amino-acid chain; its full sequence is Small ribosomal subunit protein uS14 (56 aa).

Position 9 is a phosphoserine (Ser-9). Arg-12 carries the omega-N-methylarginine modification. Cys-21, Cys-24, Cys-39, and Cys-42 together coordinate Zn(2+). Lys-48 bears the N6-acetyllysine mark.

It belongs to the universal ribosomal protein uS14 family. In terms of assembly, component of the 40S small ribosomal subunit. Requires Zn(2+) as cofactor.

It localises to the cytoplasm. The protein localises to the cytosol. It is found in the rough endoplasmic reticulum. In terms of biological role, component of the small ribosomal subunit. The ribosome is a large ribonucleoprotein complex responsible for the synthesis of proteins in the cell. The protein is Small ribosomal subunit protein uS14 (RPS29) of Sus scrofa (Pig).